The sequence spans 122 residues: MIQFMTKLNVADNTGAKQVGVIKVLGGTKRRYASVGDIVVVSVKKAQPDGIVRKGQVCKAVIVRVKKNITRSSGNSLSFDDNACVIIKEDKTPRGSRIFGPVARELRDKGFSKIVSLAPEVL.

Belongs to the universal ribosomal protein uL14 family. As to quaternary structure, part of the 50S ribosomal subunit. Forms a cluster with proteins L3 and L19. In the 70S ribosome, L14 and L19 interact and together make contacts with the 16S rRNA in bridges B5 and B8.

Functionally, binds to 23S rRNA. Forms part of two intersubunit bridges in the 70S ribosome. The protein is Large ribosomal subunit protein uL14 of Malacoplasma penetrans (strain HF-2) (Mycoplasma penetrans).